We begin with the raw amino-acid sequence, 397 residues long: Methylthioribose kinase (397 aa).

ATP contacts are provided by residues asparagine 43, lysine 60, and 114 to 116 (EDL). Aspartate 232 lines the substrate pocket. 249-251 (DPE) provides a ligand contact to ATP. Position 340 (arginine 340) interacts with substrate.

It belongs to the methylthioribose kinase family. As to quaternary structure, homodimer.

It catalyses the reaction 5-(methylsulfanyl)-D-ribose + ATP = 5-(methylsulfanyl)-alpha-D-ribose 1-phosphate + ADP + H(+). The protein operates within amino-acid biosynthesis; L-methionine biosynthesis via salvage pathway; S-methyl-5-thio-alpha-D-ribose 1-phosphate from S-methyl-5'-thioadenosine (hydrolase route): step 2/2. Functionally, catalyzes the phosphorylation of methylthioribose into methylthioribose-1-phosphate. This chain is Methylthioribose kinase, found in Bacillus pumilus (strain SAFR-032).